A 614-amino-acid polypeptide reads, in one-letter code: Vitamin B12 transporter BtuB (614 aa).

An N-terminal signal peptide occupies residues 1-20 (MIKKASLLTACSVTAFSAWA). The TonB box signature appears at 26–33 (DTLVVTAN). The TBDR plug domain occupies 38–152 (PRSTVLAPTT…IGGVVNIITT (115 aa)). Cyanocob(III)alamin contacts are provided by residues L83, S85, N92, and 110 to 111 (VS). One can recognise a TBDR beta-barrel domain in the interval 155–614 (HPGTEISAGW…EYTLSGSYTF (460 aa)). Beta stranded transmembrane passes span 158 to 165 (TEISAGWG), 169 to 178 (YQNYDVSTQQ), and 184 to 195 (TRVTLLGDYAHT). Ca(2+) is bound by residues D199, Q211, D213, and D215. Beta stranded transmembrane passes span 217-227 (FLSKTLYGALE) and 232-248 (DVWS…NRTN). Ca(2+) contacts are provided by Y249 and D250. A251 contacts cyanocob(III)alamin. Position 261 (D261) interacts with Ca(2+). The next 14 membrane-spanning stretches (beta stranded) occupy residues 263–277 (RKLY…LRYN), 279–296 (ELIK…KDYN), 309–325 (TLDE…NNII), 328–337 (HGNIGAGVDW), 353–369 (YDQR…QQVG), 371–381 (FTFEGAGRSDD), 385–400 (FGRH…WEFI), 403–417 (YRFI…KAPN), 434–443 (KSKQWEGAFE), 449–458 (VNWRISGYRN), 473–490 (YYNE…TANF), 494–509 (PLTH…ARNA), 517–529 (RRAK…QLDW), and 535–550 (DWGI…YDKD). A cyanocob(III)alamin-binding site is contributed by T309. R517 contributes to the cyanocob(III)alamin binding site. Y551 contributes to the cyanocob(III)alamin binding site. Beta stranded transmembrane passes span 558 to 572 (TVKM…LAVA), 585 to 596 (IANLFDKDYETV), and 602 to 614 (AGRE…SYTF). The TonB C-terminal box motif lies at 597–614 (YGYQTAGREYTLSGSYTF).

It belongs to the TonB-dependent receptor family. BtuB (TC 1.B.14.3.1) subfamily.

It is found in the cell outer membrane. Involved in the active translocation of vitamin B12 (cyanocobalamin) across the outer membrane to the periplasmic space. It derives its energy for transport by interacting with the trans-periplasmic membrane protein TonB. The sequence is that of Vitamin B12 transporter BtuB from Escherichia coli O1:K1 / APEC.